Consider the following 428-residue polypeptide: AP2-like ethylene-responsive transcription factor At2g41710 (428 aa).

Residues 1 to 10 show a composition bias toward polar residues; the sequence is MASVSSSDQG. The interval 1 to 28 is disordered; sequence MASVSSSDQGPKTEAGCSGGGGGESSET. A DNA-binding region (AP2/ERF) is located at residues 70–136; that stretch reads IYRGVTRHRW…WGPGTLINFP (67 aa).

This sequence belongs to the AP2/ERF transcription factor family. AP2 subfamily.

It is found in the nucleus. In terms of biological role, probably acts as a transcriptional activator. Binds to the GCC-box pathogenesis-related promoter element. May be involved in the regulation of gene expression by stress factors and by components of stress signal transduction pathways. The sequence is that of AP2-like ethylene-responsive transcription factor At2g41710 from Arabidopsis thaliana (Mouse-ear cress).